Reading from the N-terminus, the 397-residue chain is Lysophospholipid transporter LplT (397 aa).

A run of 11 helical transmembrane segments spans residues methionine 16–alanine 36, valine 53–alanine 73, leucine 91–isoleucine 111, leucine 139–alanine 159, leucine 164–isoleucine 184, leucine 227–leucine 247, alanine 253–alanine 273, threonine 281–valine 301, leucine 305–proline 325, asparagine 352–proline 372, and valine 373–tryptophan 393.

It belongs to the major facilitator superfamily. LplT (TC 2.A.1.42) family.

Its subcellular location is the cell inner membrane. In terms of biological role, catalyzes the facilitated diffusion of 2-acyl-glycero-3-phosphoethanolamine (2-acyl-GPE) into the cell. The polypeptide is Lysophospholipid transporter LplT (Klebsiella pneumoniae (strain 342)).